We begin with the raw amino-acid sequence, 185 residues long: Ribosome-recycling factor (185 aa).

It belongs to the RRF family.

It is found in the cytoplasm. Its function is as follows. Responsible for the release of ribosomes from messenger RNA at the termination of protein biosynthesis. May increase the efficiency of translation by recycling ribosomes from one round of translation to another. In Clostridium botulinum (strain Alaska E43 / Type E3), this protein is Ribosome-recycling factor.